The primary structure comprises 1376 residues: DNA-directed RNA polymerase subunit beta (1376 aa).

This sequence belongs to the RNA polymerase beta chain family. In terms of assembly, the RNAP catalytic core consists of 2 alpha, 1 beta, 1 beta' and 1 omega subunit. When a sigma factor is associated with the core the holoenzyme is formed, which can initiate transcription.

It catalyses the reaction RNA(n) + a ribonucleoside 5'-triphosphate = RNA(n+1) + diphosphate. Functionally, DNA-dependent RNA polymerase catalyzes the transcription of DNA into RNA using the four ribonucleoside triphosphates as substrates. This is DNA-directed RNA polymerase subunit beta from Methylorubrum extorquens (strain PA1) (Methylobacterium extorquens).